Reading from the N-terminus, the 581-residue chain is Proteasome-associated ATPase (581 aa).

Positions 1-28 (MTSSDLTQRKGLTMSDSTPDTPRSTPED) are disordered. The segment covering 14–24 (MSDSTPDTPRS) has biased composition (polar residues). Residues 27–66 (EDAARRLAVLSAQNERLAQVLGEARGKIVELQQQIEEFAK) are a coiled coil. Position 248 to 253 (248 to 253 (GCGKTL)) interacts with ATP. The segment at 561-581 (GSGRSAAGRTIETATSTGQYL) is disordered. A compositionally biased stretch (polar residues) spans 572–581 (ETATSTGQYL). The segment at 580 to 581 (YL) is docks into pockets in the proteasome alpha-ring.

Belongs to the AAA ATPase family. Homohexamer. Assembles into a hexameric ring structure that caps the 20S proteasome core. Strongly interacts with the prokaryotic ubiquitin-like protein Pup through a hydrophobic interface; the interacting region of ARC lies in its N-terminal coiled-coil domain. There is one Pup binding site per ARC hexamer ring. Upon ATP-binding, the C-terminus of ARC interacts with the alpha-rings of the proteasome core, possibly by binding to the intersubunit pockets.

Its pathway is protein degradation; proteasomal Pup-dependent pathway. Its function is as follows. ATPase which is responsible for recognizing, binding, unfolding and translocation of pupylated proteins into the bacterial 20S proteasome core particle. May be essential for opening the gate of the 20S proteasome via an interaction with its C-terminus, thereby allowing substrate entry and access to the site of proteolysis. Thus, the C-termini of the proteasomal ATPase may function like a 'key in a lock' to induce gate opening and therefore regulate proteolysis. This chain is Proteasome-associated ATPase, found in Sanguibacter keddieii (strain ATCC 51767 / DSM 10542 / NCFB 3025 / ST-74).